The chain runs to 1005 residues: Band 4.1-like protein 2 (1005 aa).

A disordered region spans residues 1-80 (MTTEVGSVSE…SRGISRFIPP (80 aa)). Threonine 2 carries the N-acetylthreonine modification. Serine 7 bears the Phosphoserine mark. Basic and acidic residues predominate over residues 22-31 (ATKEKPKEVA). Serine 39, serine 58, and serine 87 each carry phosphoserine. Phosphothreonine is present on threonine 89. The disordered stretch occupies residues 93–196 (AKDGGDKKEP…GGAAKRETKE (104 aa)). 2 stretches are compositionally biased toward basic and acidic residues: residues 111–157 (VLDK…EKPS) and 169–196 (VSKE…ETKE). Glycyl lysine isopeptide (Lys-Gly) (interchain with G-Cter in SUMO2) cross-links involve residues lysine 140 and lysine 144. Residues serine 170, serine 208, serine 386, serine 402, serine 499, serine 550, serine 562, serine 575, serine 598, and serine 614 each carry the phosphoserine modification. Residues 218 to 499 (VQCKVTLLDG…EHHTFYRLVS (282 aa)) enclose the FERM domain. Residues 502-610 (QPPKAKFLTL…KAPHLQLIEG (109 aa)) are hydrophilic. Residues 611–676 (KKNSLRVEGD…WEKRRITPLS (66 aa)) are spectrin--actin-binding. At tyrosine 623 the chain carries Phosphotyrosine. Phosphoserine occurs at positions 627 and 647. Residues 652–800 (KRNFMESTPE…EEAVPEASPV (149 aa)) form a disordered region. The segment covering 675 to 686 (LSLQTQGSSHET) has biased composition (polar residues). The segment covering 690–711 (VEEKKRAEVGKDERVITEEMNG) has biased composition (basic and acidic residues). Residues serine 715 and serine 718 each carry the phosphoserine modification. Low complexity predominate over residues 734-746 (STSLSSESSSSSS). Composition is skewed to basic and acidic residues over residues 754-770 (GEYR…IREE) and 780-793 (EPRP…REEA). Residue threonine 763 is modified to Phosphothreonine. At serine 828 the chain carries Phosphoserine. Residues 855–1005 (HVDIDVLPQI…ETELAEEGED (151 aa)) form a C-terminal (CTD) region.

In terms of assembly, interacts with FCGR1A. Interacts with TRPC4. Interacts (via CTD domain) with FKBP2. Interacts with NUMA1; this interaction is negatively regulated by CDK1 during metaphase and promotes anaphase-specific localization of NUMA1 in symmetrically dividing cells. As to expression, widely expressed.

Its subcellular location is the cytoplasm. The protein localises to the cytoskeleton. The protein resides in the cell cortex. It localises to the cell membrane. Required for dynein-dynactin complex and NUMA1 recruitment at the mitotic cell cortex during anaphase. The sequence is that of Band 4.1-like protein 2 from Homo sapiens (Human).